The sequence spans 352 residues: Fe(3+) ions import ATP-binding protein FbpC 1 (352 aa).

Positions 11–241 constitute an ABC transporter domain; sequence VELKHITKRF…PASRFMASFM (231 aa). 43-50 is a binding site for ATP; sequence GPSGCGKT.

The protein belongs to the ABC transporter superfamily. Fe(3+) ion importer (TC 3.A.1.10) family. In terms of assembly, the complex is composed of two ATP-binding proteins (FbpC), two transmembrane proteins (FbpB) and a solute-binding protein (FbpA).

It localises to the cell inner membrane. The enzyme catalyses Fe(3+)(out) + ATP + H2O = Fe(3+)(in) + ADP + phosphate + H(+). Functionally, part of the ABC transporter complex FbpABC involved in Fe(3+) ions import. Responsible for energy coupling to the transport system. The chain is Fe(3+) ions import ATP-binding protein FbpC 1 from Pectobacterium atrosepticum (strain SCRI 1043 / ATCC BAA-672) (Erwinia carotovora subsp. atroseptica).